A 241-amino-acid chain; its full sequence is Uridylate kinase (241 aa).

Residue 12-15 participates in ATP binding; that stretch reads KLSG. Gly-54 contributes to the UMP binding site. ATP is bound by residues Gly-55 and Arg-59. UMP-binding positions include Asp-74 and 135 to 142; that span reads VGAPYFTT. ATP-binding residues include Thr-162, Tyr-168, and Asp-171.

This sequence belongs to the UMP kinase family. As to quaternary structure, homohexamer.

The protein localises to the cytoplasm. The catalysed reaction is UMP + ATP = UDP + ADP. The protein operates within pyrimidine metabolism; CTP biosynthesis via de novo pathway; UDP from UMP (UMPK route): step 1/1. Its activity is regulated as follows. Inhibited by UTP. Functionally, catalyzes the reversible phosphorylation of UMP to UDP. In Sphingopyxis alaskensis (strain DSM 13593 / LMG 18877 / RB2256) (Sphingomonas alaskensis), this protein is Uridylate kinase.